The following is a 383-amino-acid chain: uncharacterized protein (383 aa).

Helical transmembrane passes span 49 to 69 (VDLL…GCVA) and 347 to 367 (LLGG…PVAG).

The protein to M.tuberculosis Rv0874c.

It is found in the cell membrane. This is an uncharacterized protein from Mycobacterium tuberculosis (strain CDC 1551 / Oshkosh).